The chain runs to 342 residues: Holliday junction branch migration complex subunit RuvB (342 aa).

Residues 4 to 182 are large ATPase domain (RuvB-L); the sequence is TDRLLSAGRR…FGIPIRLQFY (179 aa). Residues Leu-21, Arg-22, Gly-63, Lys-66, Thr-67, Thr-68, Arg-172, Tyr-182, and Arg-219 each coordinate ATP. Thr-67 contributes to the Mg(2+) binding site. Residues 183 to 253 are small ATPAse domain (RuvB-S); sequence TVEELERVVS…VADQSLNRLE (71 aa). The head domain (RuvB-H) stretch occupies residues 256 to 342; that stretch reads NLGLDAMDRR…EAGQDGLFDV (87 aa). The DNA site is built by Arg-292, Arg-311, and Arg-316.

The protein belongs to the RuvB family. Homohexamer. Forms an RuvA(8)-RuvB(12)-Holliday junction (HJ) complex. HJ DNA is sandwiched between 2 RuvA tetramers; dsDNA enters through RuvA and exits via RuvB. An RuvB hexamer assembles on each DNA strand where it exits the tetramer. Each RuvB hexamer is contacted by two RuvA subunits (via domain III) on 2 adjacent RuvB subunits; this complex drives branch migration. In the full resolvosome a probable DNA-RuvA(4)-RuvB(12)-RuvC(2) complex forms which resolves the HJ.

The protein resides in the cytoplasm. It catalyses the reaction ATP + H2O = ADP + phosphate + H(+). In terms of biological role, the RuvA-RuvB-RuvC complex processes Holliday junction (HJ) DNA during genetic recombination and DNA repair, while the RuvA-RuvB complex plays an important role in the rescue of blocked DNA replication forks via replication fork reversal (RFR). RuvA specifically binds to HJ cruciform DNA, conferring on it an open structure. The RuvB hexamer acts as an ATP-dependent pump, pulling dsDNA into and through the RuvAB complex. RuvB forms 2 homohexamers on either side of HJ DNA bound by 1 or 2 RuvA tetramers; 4 subunits per hexamer contact DNA at a time. Coordinated motions by a converter formed by DNA-disengaged RuvB subunits stimulates ATP hydrolysis and nucleotide exchange. Immobilization of the converter enables RuvB to convert the ATP-contained energy into a lever motion, pulling 2 nucleotides of DNA out of the RuvA tetramer per ATP hydrolyzed, thus driving DNA branch migration. The RuvB motors rotate together with the DNA substrate, which together with the progressing nucleotide cycle form the mechanistic basis for DNA recombination by continuous HJ branch migration. Branch migration allows RuvC to scan DNA until it finds its consensus sequence, where it cleaves and resolves cruciform DNA. In Rhizorhabdus wittichii (strain DSM 6014 / CCUG 31198 / JCM 15750 / NBRC 105917 / EY 4224 / RW1) (Sphingomonas wittichii), this protein is Holliday junction branch migration complex subunit RuvB.